The following is a 360-amino-acid chain: Photosystem II protein D1 (360 aa).

Transmembrane regions (helical) follow at residues 29–46 (YIGW…TATT), 118–133 (HFLL…EWEF), and 142–156 (WISV…AASA). His118 contributes to the chlorophyll a binding site. Position 126 (Trp126) interacts with pheophytin a. The [CaMn4O5] cluster site is built by Asp170 and Glu189. A helical membrane pass occupies residues 197–218 (FHQLGVAGVFGGSLFSAMHGSL). Chlorophyll a is bound at residue His198. Residues His215 and 264-265 (SF) contribute to the a quinone site. His215 is a Fe cation binding site. His272 contributes to the Fe cation binding site. The helical transmembrane segment at 274–288 (FLGLWPVVGIWFTAL) threads the bilayer. [CaMn4O5] cluster contacts are provided by His332, Glu333, Asp342, and Ala344. Residues 345–360 (AGESLPVALTAPAVNG) constitute a propeptide that is removed on maturation.

It belongs to the reaction center PufL/M/PsbA/D family. In terms of assembly, PSII is composed of 1 copy each of membrane proteins PsbA, PsbB, PsbC, PsbD, PsbE, PsbF, PsbH, PsbI, PsbJ, PsbK, PsbL, PsbM, PsbT, PsbX, PsbY, PsbZ, Psb30/Ycf12, at least 3 peripheral proteins of the oxygen-evolving complex and a large number of cofactors. It forms dimeric complexes. Requires The D1/D2 heterodimer binds P680, chlorophylls that are the primary electron donor of PSII, and subsequent electron acceptors. It shares a non-heme iron and each subunit binds pheophytin, quinone, additional chlorophylls, carotenoids and lipids. D1 provides most of the ligands for the Mn4-Ca-O5 cluster of the oxygen-evolving complex (OEC). There is also a Cl(-1) ion associated with D1 and D2, which is required for oxygen evolution. The PSII complex binds additional chlorophylls, carotenoids and specific lipids. as cofactor. Post-translationally, tyr-161 forms a radical intermediate that is referred to as redox-active TyrZ, YZ or Y-Z. C-terminally processed by CTPA; processing is essential to allow assembly of the oxygen-evolving complex and thus photosynthetic growth.

The protein localises to the plastid. Its subcellular location is the chloroplast thylakoid membrane. The catalysed reaction is 2 a plastoquinone + 4 hnu + 2 H2O = 2 a plastoquinol + O2. In terms of biological role, photosystem II (PSII) is a light-driven water:plastoquinone oxidoreductase that uses light energy to abstract electrons from H(2)O, generating O(2) and a proton gradient subsequently used for ATP formation. It consists of a core antenna complex that captures photons, and an electron transfer chain that converts photonic excitation into a charge separation. The D1/D2 (PsbA/PsbD) reaction center heterodimer binds P680, the primary electron donor of PSII as well as several subsequent electron acceptors. The polypeptide is Photosystem II protein D1 (Rhodomonas salina (Cryptomonas salina)).